A 192-amino-acid polypeptide reads, in one-letter code: Glycerol-3-phosphate acyltransferase (192 aa).

5 helical membrane-spanning segments follow: residues 4–24, 54–74, 80–100, 112–132, and 154–174; these read MFWL…AILL, LAVL…VLAG, PSQQ…PLYF, AGVL…AWLL, and LLAW…LLIV.

This sequence belongs to the PlsY family. Probably interacts with PlsX.

Its subcellular location is the cell inner membrane. It catalyses the reaction an acyl phosphate + sn-glycerol 3-phosphate = a 1-acyl-sn-glycero-3-phosphate + phosphate. It participates in lipid metabolism; phospholipid metabolism. Catalyzes the transfer of an acyl group from acyl-phosphate (acyl-PO(4)) to glycerol-3-phosphate (G3P) to form lysophosphatidic acid (LPA). This enzyme utilizes acyl-phosphate as fatty acyl donor, but not acyl-CoA or acyl-ACP. This Pseudomonas syringae pv. tomato (strain ATCC BAA-871 / DC3000) protein is Glycerol-3-phosphate acyltransferase.